The chain runs to 363 residues: uncharacterized protein (363 aa).

The S-adenosyl-L-methionine site is built by glutamine 198, tyrosine 225, glutamate 246, and aspartate 291. The active-site Nucleophile is the cysteine 318.

It belongs to the class I-like SAM-binding methyltransferase superfamily. RNA M5U methyltransferase family.

This is an uncharacterized protein from Mycoplasma mobile (strain ATCC 43663 / 163K / NCTC 11711) (Mesomycoplasma mobile).